A 423-amino-acid polypeptide reads, in one-letter code: Calcium up-regulated protein A (423 aa).

A compositionally biased stretch (basic and acidic residues) spans 1–19 (MINIEDISKSSNESEEKQL). Residues 1–27 (MINIEDISKSSNESEEKQLKSTSTSSK) are disordered. Ricin B-type lectin domains follow at residues 27-147 (KPKY…WTTF) and 118-251 (QGNG…WGIN).

This sequence belongs to the cup family.

It is found in the cytoplasm. The protein localises to the membrane. In terms of biological role, may play an important role in stabilizing and/or regulating the cell membrane during Ca(2+) stress or certain stages of development. The polypeptide is Calcium up-regulated protein A (cupA) (Dictyostelium discoideum (Social amoeba)).